A 239-amino-acid polypeptide reads, in one-letter code: Small ribosomal subunit protein uS3c (239 aa).

The 97-residue stretch at 43–139 folds into the KH type-2 domain; it reads IKNYIQKNRK…RLNIGIEKVK (97 aa).

The protein belongs to the universal ribosomal protein uS3 family. In terms of assembly, part of the 30S ribosomal subunit.

It localises to the plastid. The protein resides in the chloroplast. This chain is Small ribosomal subunit protein uS3c (rps3), found in Oryza nivara (Indian wild rice).